Reading from the N-terminus, the 158-residue chain is MHRAGAAVTANVWCRAGGIRMAPRPVIPVATQQRLRRQADRQSLGSSGLPALNCTPIRHTIDVMATKPERKTERLAARLTPEQDALIRRAAEAEGTDLTNFTVTAALAHARDVLADRRLFVLTDAAWTEFLAALDRPVSHKPRLEKLFAARSIFDTEG.

It belongs to the TacA antitoxin family. Forms a complex with cognate toxin TacT.

Its function is as follows. Antitoxin component of a type II toxin-antitoxin (TA) system. Counteracts the toxic effect of cognate toxin TacT. Functionally, tacA-TacT both represses and derepresses expression of its own operon. In Mycobacterium tuberculosis (strain ATCC 25618 / H37Rv), this protein is Antitoxin TacA.